A 1055-amino-acid chain; its full sequence is Vacuolar protein sorting-associated protein 54 (1055 aa).

Residues 363 to 383 (TKKIIEVHQKYEQKKHLLAKL) adopt a coiled-coil conformation. A disordered region spans residues 774–794 (IDDGPTKKPFKRTGSSATIDS).

It belongs to the VPS54 family. Component of the Golgi-associated retrograde protein (GARP) complex, also called VFT (VPS fifty-three) complex, composed of VPS51, VPS52, VPS53 and VPS54.

Its subcellular location is the golgi apparatus. It localises to the trans-Golgi network. Its function is as follows. Acts as a component of the GARP complex that is involved in retrograde transport from early and late endosomes to the trans-Golgi network (TGN). The GARP complex facilitates tethering as well as SNARE complex assembly at the Golgi. This is Vacuolar protein sorting-associated protein 54 (vps-54) from Caenorhabditis briggsae.